The following is a 131-amino-acid chain: Small ribosomal subunit protein uS8 (131 aa).

The protein belongs to the universal ribosomal protein uS8 family. Part of the 30S ribosomal subunit. Contacts proteins S5 and S12.

Its function is as follows. One of the primary rRNA binding proteins, it binds directly to 16S rRNA central domain where it helps coordinate assembly of the platform of the 30S subunit. The sequence is that of Small ribosomal subunit protein uS8 from Chlorobium phaeobacteroides (strain DSM 266 / SMG 266 / 2430).